The primary structure comprises 437 residues: 3-ketoacyl-CoA thiolase (437 aa).

The active-site Acyl-thioester intermediate is Cys99. Residues His392 and Cys422 each act as proton acceptor in the active site.

This sequence belongs to the thiolase-like superfamily. Thiolase family. As to quaternary structure, heterotetramer of two alpha chains (FadJ) and two beta chains (FadI).

The protein localises to the cytoplasm. The catalysed reaction is an acyl-CoA + acetyl-CoA = a 3-oxoacyl-CoA + CoA. It participates in lipid metabolism; fatty acid beta-oxidation. In terms of biological role, catalyzes the final step of fatty acid oxidation in which acetyl-CoA is released and the CoA ester of a fatty acid two carbons shorter is formed. The sequence is that of 3-ketoacyl-CoA thiolase from Pectobacterium atrosepticum (strain SCRI 1043 / ATCC BAA-672) (Erwinia carotovora subsp. atroseptica).